The primary structure comprises 434 residues: Protein phosphatase 2C 56 (434 aa).

The PPM-type phosphatase domain maps to 128–422 (LYGFTSICGR…DNISVVVVDL (295 aa)). Residues aspartate 177, aspartate 261, serine 262, aspartate 347, and aspartate 413 each contribute to the Mg(2+) site. The short motif at 423–427 (KPRRK) is the Nuclear localization signal element.

This sequence belongs to the PP2C family. As to quaternary structure, interacts with SPK1, ATHB-6, CIPK15/PKS3, GPX3, SRK2E/OST1, SRK2D, SRK2I, SCAR1, SCAR2, SCAR3 and SCARL. Binds to the PA released by the phospholipase D alpha 1 (PLDALPHA1) in response to ABA during the stomatal closure regulation. Interacts with ABA-bounded PYR1, PYL1, PYL2, PYL3, PYL4, PYL5, PYL6, PYL7, PYL8, PYL9, PYL10, and with free PYL2, PYL3, PYL4 and PYL13. Binds to RPL12B, CPK21 and CPK23. Binds to MAPKKK18. Interacts with KIN10. Interacts with phosphorylated PYL8/RCAR3. It depends on Mg(2+) as a cofactor. The cofactor is Mn(2+). In terms of tissue distribution, expressed in seeds and seedlings. In roots, confined to lateral root caps and columella cells.

It is found in the nucleus. The protein resides in the cytoplasm. The protein localises to the cell membrane. It carries out the reaction O-phospho-L-seryl-[protein] + H2O = L-seryl-[protein] + phosphate. The catalysed reaction is O-phospho-L-threonyl-[protein] + H2O = L-threonyl-[protein] + phosphate. Its activity is regulated as follows. Phosphatase activity repressed by oxidized GPX3 and phosphatidic acid (PA). PA is produced by PLD alpha 1 in response to ABA. Repressed by PYR/PYL/RCAR ABA receptors in an ABA-dependent manner. Key component and repressor of the abscisic acid (ABA) signaling pathway that regulates numerous ABA responses, such as stomatal closure, osmotic water permeability of the plasma membrane (Pos), drought-induced resistance and rhizogenesis, response to glucose, high light stress, seed germination and inhibition of vegetative growth. During the stomatal closure regulation, modulates the inward calcium-channel permeability as well as the actin reorganization in guard cells in response to ABA. Involved in the resistance to the bacterial pathogen Pseudomonas syringae pv. tomato. Controls negatively fibrillin expression that is involved in mediating ABA-induced photoprotection. May be involved in ABA content regulation. Plays a role in the Pro accumulation in response to reduced water availability (low water potential). Required for the ABA negative regulation of the ethylene-induced hyponastic growth. Involved in acquired thermotolerance of root growth and seedling survival. Activates/represses SRK2E/OST1 in response to ABA-dependent stimuli, especially in stomata closure regulation involving SLAC1. Represses MAPKKK18 activity and promotes MAPKKK18 degradation by the proteasome pathway upon abscisic acid (ABA) treatment. Represses KIN10 activity by the specific dephosphorylation of its T-loop Thr-198, leading to a poststress inactivation of SnRK1 signaling. Restricts MAPKKK20 activity by dephosphorylation. In Arabidopsis thaliana (Mouse-ear cress), this protein is Protein phosphatase 2C 56.